Reading from the N-terminus, the 398-residue chain is Transcription factor kk1f (398 aa).

The disordered stretch occupies residues 1–28 (MTFVETVAVPDNEERPSAGHNRPVADST). Residues 31–62 (PNAREMKVQNRVAQRTHHRRLKTKLEVLRERL) enclose the bZIP domain. Residues 34-50 (REMKVQNRVAQRTHHRR) are basic motif. Positions 51-58 (LKTKLEVL) are leucine-zipper.

It belongs to the bZIP family.

Its subcellular location is the nucleus. It participates in secondary metabolite biosynthesis. Transcription factor; part of the gene cluster that mediates the biosynthesis of KK-1, a novel cyclic depsipeptide with 10 residues which is a promising active compound with high activity against many plant pathogens, especially Botrytis cinerea. Positively regulates the expression of all the genes from the KK-1 biosynthesis gene cluster. The protein is Transcription factor kk1f of Curvularia clavata.